Consider the following 781-residue polypeptide: AP-3 complex subunit beta (781 aa).

5 HEAT repeats span residues Pro-113–Tyr-151, Ile-153–Ile-186, Ser-187–Gln-224, Asp-294–Phe-332, and Pro-521–Asp-559. Disordered regions lie at residues Lys-694–His-713 and Ala-731–Glu-781. Positions Ala-699 to Ser-712 are enriched in polar residues. Over residues Ser-746–Ser-758 the composition is skewed to acidic residues. Positions Gly-759 to Ser-774 are enriched in low complexity.

The protein belongs to the adaptor complexes large subunit family. In terms of assembly, adaptor protein complex 3 (AP-3) is a heterotetramer composed of 2 large adaptins (APL5 and APL6), a medium adaptin (APM3) and a small adaptin (APS3).

It localises to the golgi apparatus. The protein localises to the cytoplasmic vesicle. It is found in the clathrin-coated vesicle membrane. In terms of biological role, part of the AP-3 complex, an adaptor-related complex which is not clathrin-associated. The complex is associated with the Golgi region as well as more peripheral structures. It facilitates the budding of vesicles from the Golgi membrane and may be directly involved in trafficking to the vacuole. The chain is AP-3 complex subunit beta (APL6) from Eremothecium gossypii (strain ATCC 10895 / CBS 109.51 / FGSC 9923 / NRRL Y-1056) (Yeast).